Here is a 418-residue protein sequence, read N- to C-terminus: Protease LasA (418 aa).

The N-terminal stretch at M1–A31 is a signal peptide. The propeptide occupies H32–L236. Positions 259 and 272 each coordinate Zn(2+). An intrachain disulfide couples C301 to C347. Active-site proton donor/acceptor residues include H317 and H356. H358 provides a ligand contact to Zn(2+). Cysteines 391 and 406 form a disulfide.

Belongs to the peptidase M23A family. Requires Zn(2+) as cofactor.

Its subcellular location is the secreted. Involved in proteolysis and elastolysis (degradation of the host protein elastin). Has staphylolytic activity (degrades pentaglycine cross-links in cell wall peptidoglycan), preferring Gly-Gly-|-X substrates where X is Ala or Gly. Enhances the elastolytic but not proteolytic activity of elastase (lasB) and elastolytic activity of other proteases. Degradation of elastin is likely to contribute to the pathogenicity of P.aeruginosa. This is Protease LasA (lasA) from Pseudomonas aeruginosa (strain UCBPP-PA14).